Consider the following 79-residue polypeptide: Ferredoxin (79 aa).

2 4Fe-4S ferredoxin-type domains span residues 2 to 30 and 31 to 60; these read PHVI…YDGG and DQFY…PEED. [3Fe-4S] cluster contacts are provided by C9 and C17. [4Fe-4S] cluster is bound by residues C21, C40, C43, and C46. C50 provides a ligand contact to [3Fe-4S] cluster.

[4Fe-4S] cluster serves as cofactor. Requires [3Fe-4S] cluster as cofactor.

Functionally, ferredoxins are iron-sulfur proteins that transfer electrons in a wide variety of metabolic reactions. The chain is Ferredoxin from Thermus thermophilus (strain ATCC 27634 / DSM 579 / HB8).